A 161-amino-acid chain; its full sequence is MAEDKPVVESFQLDHTKVKAPYVRYIDTETGLHGDVISNYDLRLVQPNENAIPTGGLHTIEHTIAVLLRERIPGYIDCSPFGCRTGFHLLTWGEHSTEDVARALKESLEFIAYEATWDDVPATTIESCGNYRDHSLFTAKEWCKDILAKGISSDPFERRLV.

3 residues coordinate Fe cation: His-58, His-62, and Cys-128.

Belongs to the LuxS family. Homodimer. Fe cation is required as a cofactor.

It catalyses the reaction S-(5-deoxy-D-ribos-5-yl)-L-homocysteine = (S)-4,5-dihydroxypentane-2,3-dione + L-homocysteine. Functionally, involved in the synthesis of autoinducer 2 (AI-2) which is secreted by bacteria and is used to communicate both the cell density and the metabolic potential of the environment. The regulation of gene expression in response to changes in cell density is called quorum sensing. Catalyzes the transformation of S-ribosylhomocysteine (RHC) to homocysteine (HC) and 4,5-dihydroxy-2,3-pentadione (DPD). This is S-ribosylhomocysteine lyase from Bifidobacterium adolescentis (strain ATCC 15703 / DSM 20083 / NCTC 11814 / E194a).